We begin with the raw amino-acid sequence, 484 residues long: Protein nucleotidyltransferase YdiU (484 aa).

ATP is bound by residues G81, G83, R84, K103, D115, G116, R166, and R173. Catalysis depends on D244, which acts as the Proton acceptor. 2 residues coordinate Mg(2+): N245 and D254. Residue D254 participates in ATP binding.

Belongs to the SELO family. Mg(2+) serves as cofactor. It depends on Mn(2+) as a cofactor.

It carries out the reaction L-seryl-[protein] + ATP = 3-O-(5'-adenylyl)-L-seryl-[protein] + diphosphate. It catalyses the reaction L-threonyl-[protein] + ATP = 3-O-(5'-adenylyl)-L-threonyl-[protein] + diphosphate. The catalysed reaction is L-tyrosyl-[protein] + ATP = O-(5'-adenylyl)-L-tyrosyl-[protein] + diphosphate. The enzyme catalyses L-histidyl-[protein] + UTP = N(tele)-(5'-uridylyl)-L-histidyl-[protein] + diphosphate. It carries out the reaction L-seryl-[protein] + UTP = O-(5'-uridylyl)-L-seryl-[protein] + diphosphate. It catalyses the reaction L-tyrosyl-[protein] + UTP = O-(5'-uridylyl)-L-tyrosyl-[protein] + diphosphate. Functionally, nucleotidyltransferase involved in the post-translational modification of proteins. It can catalyze the addition of adenosine monophosphate (AMP) or uridine monophosphate (UMP) to a protein, resulting in modifications known as AMPylation and UMPylation. The chain is Protein nucleotidyltransferase YdiU from Shewanella sp. (strain MR-4).